Reading from the N-terminus, the 248-residue chain is MSHQADNKLTLRRDGFTFKQFFVAHDRCAMKVGTDGILLGAWAPLSSVTRILDIGSGSGLLALMLAQRSDTHVRIDAVELDSAASQQAKENISASPWADRIAVYAEDIIDFADTRSADYSLIISNPPYFPPGIACGSAEREQARYTTLLTHETLLRCAHQLLMPDGLFCVVLPIQVAENFIPLAQQHNWYVHQQLRVSEQEDKPAHRVLLALSRQKKECVNASLAIRDEERRYSTAFQQLTKDFYLFM.

This sequence belongs to the methyltransferase superfamily. tRNA (adenine-N(6)-)-methyltransferase family.

Its subcellular location is the cytoplasm. The catalysed reaction is adenosine(37) in tRNA1(Val) + S-adenosyl-L-methionine = N(6)-methyladenosine(37) in tRNA1(Val) + S-adenosyl-L-homocysteine + H(+). Its function is as follows. Specifically methylates the adenine in position 37 of tRNA(1)(Val) (anticodon cmo5UAC). The polypeptide is tRNA1(Val) (adenine(37)-N6)-methyltransferase (Pectobacterium carotovorum subsp. carotovorum (strain PC1)).